We begin with the raw amino-acid sequence, 157 residues long: uncharacterized protein (157 aa).

An N-terminal signal peptide occupies residues 1 to 17 (MSMKTKAAFHLVLFGLA). Cysteine 18 carries the N-palmitoyl cysteine lipid modification. Cysteine 18 is lipidated: S-diacylglycerol cysteine. 3 helical membrane passes run 42 to 64 (MVFD…YLYL), 98 to 120 (ASYI…YPLF), and 124 to 146 (IPFF…YVIS).

Its subcellular location is the cell membrane. This is an uncharacterized protein from Bacillus subtilis (strain 168).